Consider the following 501-residue polypeptide: 1-aminocyclopropane-1-carboxylate synthase-like protein 1 (501 aa).

Substrate is bound at residue glutamate 105. N6-(pyridoxal phosphate)lysine is present on lysine 323. A disordered region spans residues 480 to 501 (GKSQVAEDPRPSQSQEPSDQRR). Over residues 490-501 (PSQSQEPSDQRR) the composition is skewed to polar residues.

It belongs to the class-I pyridoxal-phosphate-dependent aminotransferase family.

Functionally, does not catalyze the synthesis of 1-aminocyclopropane-1-carboxylate but is capable of catalyzing the deamination of L-vinylglycine. The polypeptide is 1-aminocyclopropane-1-carboxylate synthase-like protein 1 (ACCS) (Homo sapiens (Human)).